A 489-amino-acid chain; its full sequence is MESYLTKQAVHNRAKEAVGKSVLELNGGESIKQSKSSVGDAFENWFGKKKDSDSKPDMAEAGVELKATPFKKLKNGKYSSKERLVLNIINYEKVANENFETSSFLSKNNTIELAFYEYIKGTPSDNWIIKEAVLYEMHKNPIDYEIIKQDWEIINQYINEGKAHELSEGLTSYLAPCTKGANASSLRNQPYSDIKAKQRAFSLKSGYMTSILRKYVLGDEKIDSIVKDPFEIKEKSIEDIVFEKFQPYINWSIDKLCEHFSINKGEKGLNYRIASAILNLKGKTTKSKPFPEVEEFEKSSIVVKTVHFNKKNVNKESMSFGAFKFEELANEEWEDSEGYPSAQWRNFLLETRFLFFVVKEDEDGVDIFKGIKFFSMPEEDINGPVKRMWDDTVKKLKEGVTLEAVPDKSTKDGWRIKNNFVDKSDDLICHVRPHTNNRDYRGGSNADKLPKKINWINRPDSDDYSDEWMTKQSFWINNDYIKKQVEDLL.

The cofactor is Mg(2+).

The enzyme catalyses Endonucleolytic cleavage of DNA to give specific double-stranded fragments with terminal 5'-phosphates.. In terms of biological role, an E and P subtype restriction enzyme that recognizes the double-stranded sequence 5'-GATC-3' and cleaves before G-1. The polypeptide is Type II restriction enzyme Sau3AI (sau3AIR) (Staphylococcus aureus).